We begin with the raw amino-acid sequence, 457 residues long: Embryogenesis-associated protein EMB8 (457 aa).

Positions 39 to 59 (KKPAAGACEEQDELTSGSAAR) are disordered. In terms of domain architecture, AB hydrolase-1 spans 151–391 (PVLILLPGLT…LVVTPNGGHL (241 aa)). Residues Ser-231, Asp-361, and His-390 each act as charge relay system in the active site. A compositionally biased stretch (basic and acidic residues) spans 438-447 (VDSVHTRETN). Residues 438–457 (VDSVHTRETNNYKSPIENVN) are disordered. Polar residues predominate over residues 448–457 (NYKSPIENVN).

Belongs to the AB hydrolase superfamily. AB hydrolase 4 family.

In Picea glauca (White spruce), this protein is Embryogenesis-associated protein EMB8 (EMB8).